A 475-amino-acid polypeptide reads, in one-letter code: Eukaryotic translation initiation factor 3 subunit L (475 aa).

The PCI domain occupies 257 to 451 (DAIRMFSHIL…DLDYAMQGDL (195 aa)).

Belongs to the eIF-3 subunit L family. In terms of assembly, component of the eukaryotic translation initiation factor 3 (eIF-3) complex.

Its subcellular location is the cytoplasm. Component of the eukaryotic translation initiation factor 3 (eIF-3) complex, which is involved in protein synthesis of a specialized repertoire of mRNAs and, together with other initiation factors, stimulates binding of mRNA and methionyl-tRNAi to the 40S ribosome. The eIF-3 complex specifically targets and initiates translation of a subset of mRNAs involved in cell proliferation. This is Eukaryotic translation initiation factor 3 subunit L from Botryotinia fuckeliana (strain B05.10) (Noble rot fungus).